The following is a 291-amino-acid chain: ATP phosphoribosyltransferase (291 aa).

The protein belongs to the ATP phosphoribosyltransferase family. Long subfamily. The cofactor is Mg(2+).

The protein localises to the cytoplasm. It carries out the reaction 1-(5-phospho-beta-D-ribosyl)-ATP + diphosphate = 5-phospho-alpha-D-ribose 1-diphosphate + ATP. The protein operates within amino-acid biosynthesis; L-histidine biosynthesis; L-histidine from 5-phospho-alpha-D-ribose 1-diphosphate: step 1/9. With respect to regulation, feedback inhibited by histidine. Its function is as follows. Catalyzes the condensation of ATP and 5-phosphoribose 1-diphosphate to form N'-(5'-phosphoribosyl)-ATP (PR-ATP). Has a crucial role in the pathway because the rate of histidine biosynthesis seems to be controlled primarily by regulation of HisG enzymatic activity. The protein is ATP phosphoribosyltransferase of Geotalea uraniireducens (strain Rf4) (Geobacter uraniireducens).